Here is a 577-residue protein sequence, read N- to C-terminus: Isocitrate dehydrogenase kinase/phosphatase (577 aa).

Residues 318–324 and K339 each bind ATP; that span reads APGVRGM. Residue D374 is part of the active site.

Belongs to the AceK family.

It is found in the cytoplasm. It catalyses the reaction L-seryl-[isocitrate dehydrogenase] + ATP = O-phospho-L-seryl-[isocitrate dehydrogenase] + ADP + H(+). Functionally, bifunctional enzyme which can phosphorylate or dephosphorylate isocitrate dehydrogenase (IDH) on a specific serine residue. This is a regulatory mechanism which enables bacteria to bypass the Krebs cycle via the glyoxylate shunt in response to the source of carbon. When bacteria are grown on glucose, IDH is fully active and unphosphorylated, but when grown on acetate or ethanol, the activity of IDH declines drastically concomitant with its phosphorylation. This chain is Isocitrate dehydrogenase kinase/phosphatase, found in Pseudomonas aeruginosa (strain LESB58).